The primary structure comprises 561 residues: Methionine--tRNA ligase (561 aa).

Positions 11 to 21 match the 'HIGH' region motif; the sequence is PYVNTVPHLGN. Residues Cys143, Cys146, Cys156, and Cys159 each contribute to the Zn(2+) site. Lys334 is a binding site for ATP.

It belongs to the class-I aminoacyl-tRNA synthetase family. MetG type 1 subfamily. Zn(2+) is required as a cofactor.

Its subcellular location is the cytoplasm. It catalyses the reaction tRNA(Met) + L-methionine + ATP = L-methionyl-tRNA(Met) + AMP + diphosphate. Is required not only for elongation of protein synthesis but also for the initiation of all mRNA translation through initiator tRNA(fMet) aminoacylation. This chain is Methionine--tRNA ligase, found in Ignicoccus hospitalis (strain KIN4/I / DSM 18386 / JCM 14125).